Reading from the N-terminus, the 100-residue chain is MVPITYYLLLAAALFCMGMFGVLVRRNALVVFMSVELMLNAANLTFVAFARMRGDNLGHVSAFFVIAVAAAEAAIGLAIVIAVFRSRGSILLEDLRTMKH.

The next 3 membrane-spanning stretches (helical) occupy residues 4–24, 29–49, and 63–83; these read ITYYLLLAAALFCMGMFGVLV, LVVFMSVELMLNAANLTFVAF, and FFVIAVAAAEAAIGLAIVIAV.

It belongs to the complex I subunit 4L family. NDH-1 is composed of 14 different subunits. Subunits NuoA, H, J, K, L, M, N constitute the membrane sector of the complex.

It is found in the cell inner membrane. It carries out the reaction a quinone + NADH + 5 H(+)(in) = a quinol + NAD(+) + 4 H(+)(out). Its function is as follows. NDH-1 shuttles electrons from NADH, via FMN and iron-sulfur (Fe-S) centers, to quinones in the respiratory chain. The immediate electron acceptor for the enzyme in this species is believed to be ubiquinone. Couples the redox reaction to proton translocation (for every two electrons transferred, four hydrogen ions are translocated across the cytoplasmic membrane), and thus conserves the redox energy in a proton gradient. The polypeptide is NADH-quinone oxidoreductase subunit K (Myxococcus xanthus (strain DK1622)).